We begin with the raw amino-acid sequence, 98 residues long: Sarcosine oxidase subunit delta (98 aa).

Residues Cys6, Cys9, His59, and Cys63 each contribute to the Zn(2+) site.

This sequence belongs to the SoxD family. As to quaternary structure, heterotetramer composed of subunits alpha (SoxA), beta (SoxB), gamma (SoxG) and delta (SoxD).

The protein localises to the cytoplasm. The enzyme catalyses sarcosine + (6S)-5,6,7,8-tetrahydrofolate + O2 = (6R)-5,10-methylene-5,6,7,8-tetrahydrofolate + glycine + H2O2. The catalysed reaction is sarcosine + O2 + H2O = formaldehyde + glycine + H2O2. Its function is as follows. In the presence of tetrahydrofolate, catalyzes the oxidative demethylation of sarcosine to yield glycine, 5,10-methylenetetrahydrofolate and hydrogen peroxide. In the absence of tetrahydrofolate, catalyzes the oxidative demethylation of sarcosine to yield glycine, formaldehyde and hydrogen peroxide. The protein is Sarcosine oxidase subunit delta of Corynebacterium sp. (strain P-1).